Here is a 1482-residue protein sequence, read N- to C-terminus: Chromosome partition protein MukB (1482 aa).

34-41 is an ATP binding site; the sequence is GGNGAGKS. Coiled coils occupy residues 337 to 418, 444 to 472, 509 to 601, 781 to 805, 835 to 1116, and 1210 to 1265; these read LNLV…QYQQ, LDTY…QTAH, RHLA…TSHA, AARE…ATLS, EAEI…AKAG, and EAIE…LQSV. The tract at residues 666–783 is flexible hinge; the sequence is PGGAEDARLN…SVPLFGRAAR (118 aa). Residues 1049–1077 form a disordered region; that stretch reads ADAGAEERARQRRDELHTRLSNNRSRRNQ. Over residues 1051–1066 the composition is skewed to basic and acidic residues; that stretch reads AGAEERARQRRDELHT.

It belongs to the SMC family. MukB subfamily. Homodimerization via its hinge domain. Binds to DNA via its C-terminal region. Interacts, and probably forms a ternary complex, with MukE and MukF via its C-terminal region. The complex formation is stimulated by calcium or magnesium. Interacts with tubulin-related protein FtsZ.

It is found in the cytoplasm. Its subcellular location is the nucleoid. In terms of biological role, plays a central role in chromosome condensation, segregation and cell cycle progression. Functions as a homodimer, which is essential for chromosome partition. Involved in negative DNA supercoiling in vivo, and by this means organize and compact chromosomes. May achieve or facilitate chromosome segregation by condensation DNA from both sides of a centrally located replisome during cell division. This is Chromosome partition protein MukB from Cronobacter sakazakii (strain ATCC BAA-894) (Enterobacter sakazakii).